The following is a 529-amino-acid chain: DnaJ homolog l(2)tid, mitochondrial (529 aa).

Residues 1–22 constitute a mitochondrion transit peptide; it reads MISCKNLCVLRQLPLKNCRRHY. Arg35 is subject to Omega-N-methylarginine. Residues 80 to 145 enclose the J domain; the sequence is DYYATLGVAK…QKRREYDTYG (66 aa). Lys121 carries the post-translational modification N6-acetyllysine. Residues 230–308 form a CR-type zinc finger; sequence GVNKDVNVNV…CEGKGQTVQR (79 aa). Positions 243, 246, 260, 263, 282, 285, 296, and 299 each coordinate Zn(2+). A CXXCXGXG motif; approximate repeat occupies 243-250; the sequence is CPKCAGSK. One copy of the CXXCXGXG motif repeat lies at 260–267; the sequence is CQYCNGTG. The stretch at 282–289 is one CXXCXGXG motif; approximate repeat; the sequence is CRYCQGTR. A CXXCXGXG motif repeat occupies 296-303; that stretch reads CAECEGKG. A disordered region spans residues 441–529; sequence TPGQIHGMAQ…FLNKIKSMFN (89 aa). The segment covering 497–508 has biased composition (basic and acidic residues); that stretch reads QSEKSETRRKDQ.

It localises to the mitochondrion outer membrane. May act as a tumor suppressor in larval imaginal disks. This Drosophila virilis (Fruit fly) protein is DnaJ homolog l(2)tid, mitochondrial (l(2)tid).